We begin with the raw amino-acid sequence, 1551 residues long: UDP-glucose:glycoprotein glucosyltransferase 1 (1551 aa).

An N-terminal signal peptide occupies residues 1-42; sequence MCSRGDANTADAAAARRVTGLRYNMRLLIALALPCLFSLAEA. N-linked (GlcNAc...) asparagine glycosylation is found at Asn269, Asn536, and Asn1228. The segment at 1244–1551 is glucosyltransferase; the sequence is KAEEVKQDKD…QEGSQKHEEL (308 aa). Ser1277 is subject to Phosphoserine. The segment at 1531 to 1551 is disordered; that stretch reads KELGTLHTEETQEGSQKHEEL. A Prevents secretion from ER motif is present at residues 1548–1551; sequence HEEL.

It belongs to the glycosyltransferase 8 family. Monomer as well as in a tight complex with SELENOF. Interacts with METTL23. Part of a large chaperone multiprotein complex comprising DNAJB11, HSP90B1, HSPA5, HYOU, PDIA2, PDIA4, PDIA6, PPIB, SDF2L1, UGGT1 and very small amounts of ERP29, but not, or at very low levels, CALR nor CANX. It depends on Ca(2+) as a cofactor. Mn(2+) is required as a cofactor.

Its subcellular location is the endoplasmic reticulum lumen. The protein resides in the endoplasmic reticulum-Golgi intermediate compartment. The enzyme catalyses N(4)-(alpha-D-Man-(1-&gt;2)-alpha-D-Man-(1-&gt;2)-alpha-D-Man-(1-&gt;3)-[alpha-D-Man-(1-&gt;2)-alpha-D-Man-(1-&gt;3)-[alpha-D-Man-(1-&gt;2)-alpha-D-Man-(1-&gt;6)]-alpha-D-Man-(1-&gt;6)]-beta-D-Man-(1-&gt;4)-beta-D-GlcNAc-(1-&gt;4)-beta-D-GlcNAc)-L-asparaginyl-[protein] (N-glucan mannose isomer 9A1,2,3B1,2,3) + UDP-alpha-D-glucose = N(4)-(alpha-D-Glc-(1-&gt;3)-alpha-D-Man-(1-&gt;2)-alpha-D-Man-(1-&gt;2)-alpha-D-Man-(1-&gt;3)-[alpha-D-Man-(1-&gt;2)-alpha-D-Man-(1-&gt;3)-[alpha-D-Man-(1-&gt;2)-alpha-D-Man-(1-&gt;6)]-alpha-D-Man-(1-&gt;6)]-beta-D-Man-(1-&gt;4)-beta-D-GlcNAc-(1-&gt;4)-beta-D-GlcNAc)-L-asparaginyl-[protein] + UDP + H(+). Its pathway is protein modification; protein glycosylation. Recognizes glycoproteins with minor folding defects. Reglucosylates single N-glycans near the misfolded part of the protein, thus providing quality control for protein folding in the endoplasmic reticulum. Reglucosylated proteins are recognized by calreticulin for recycling to the endoplasmic reticulum and refolding or degradation. This Mus musculus (Mouse) protein is UDP-glucose:glycoprotein glucosyltransferase 1 (Uggt1).